A 1111-amino-acid polypeptide reads, in one-letter code: MFTLYKSLKFNLFVKSAFKVILNEPLLNPLTKEIFIVNNKETEQWIKIFIAKKYKVCTNIKFFKLKHFILNILKQNTPKLYSKSEFSKYSIMWKIINIPDIQHLLTKIVSKNNTYSTLFKIASSISNLFQLYLKYRPDYIKKWEQKSNIPKTRLKQKWQQIIWMRIIKYTKDANKPILHFSNLLYDSIKKMQRNNFINTKLPVRIFIFNITPITPQYAIFLKSISKYCSVHFFYATASYNDKQMFSTSFIKFKQTQEISNNQLLSLLHSKNKNIIYHEIENFQKNTKFQSYWITYEYEQMLFLSLIKDKTINLNFKIKQNSLLQYLQNKILNLHSIQKKNNEQENNKILILKTDKSLSIHSCHTLIREIEVLHNNLLNILNDNNDILFQDVLVISKNLDTYIPYINQIFNSASSKNFIPFSINYKNIKNIEFYKTILELIDLPNIELNINKITNLLNIPTLLKKVQINEQEIPILLQIINQTEIQWENDNILSNDWLSNDITKCWEHGLQRIFLGQIINNIDYKFWENIVPYNEFSTLYYNIFNKLISLISLLNKWKKILSKPKFLSHWDITFKKLLNDFFTDHEQKQPEAKLIIKKWTEIIHSGMQEKYTKKISITLLKNELCNSVSYISQSNYLFSGKITFCNNFTLTNIPFKIIYLIGLNDNISSNTHESFDIYNLLKLHPRAYDPCDEINHKNLLLKTLLSAKKFFYISHQIVSNNYKKLNNIPIAIDKIIKYITQYFYIKNKNKDNFNDNLKDIKSHIYHNYTFYAHEKRNFLEKLNYPNFNTTIWKMATLINNSHKEFIKKLPSIKNQTINYNTLILFWKNPIQTFFHVRLNIQLNTTKNKHMHQNKHFINKLDQYKMNKTLLKFFLYKQNTNQLFQYYKNIGIIPNNNIGNIIWEYTKKLITPLYDQIMKIKKILNNSKFCINVKNKCMLHGQLKNINSSGGLLRWKATKLSFQDIISCWLEHLLYCSLYKKHNSILIGTNHQIITFYKLENKTAKYYLKKYISGYFDGMEQPILLTKSGINWINAIYDKKNNKFYTNTNKNLNAYKIFLNTWNGNNWITGEKDDPYIQKMIVYLTKKNIQKIYKTTKKWLTPILKNISYSKYH.

This sequence belongs to the RecC family. As to quaternary structure, heterotrimer of RecB, RecC and RecD. All subunits contribute to DNA-binding.

A helicase/nuclease that prepares dsDNA breaks (DSB) for recombinational DNA repair. Binds to DSBs and unwinds DNA via a highly rapid and processive ATP-dependent bidirectional helicase activity. Unwinds dsDNA until it encounters a Chi (crossover hotspot instigator) sequence from the 3' direction. Cuts ssDNA a few nucleotides 3' to the Chi site. The properties and activities of the enzyme are changed at Chi. The Chi-altered holoenzyme produces a long 3'-ssDNA overhang and facilitates RecA-binding to the ssDNA for homologous DNA recombination and repair. Holoenzyme degrades any linearized DNA that is unable to undergo homologous recombination. In the holoenzyme this subunit recognizes the wild-type Chi sequence, and when added to isolated RecB increases its ATP-dependent helicase processivity. The chain is RecBCD enzyme subunit RecC from Buchnera aphidicola subsp. Baizongia pistaciae (strain Bp).